Reading from the N-terminus, the 620-residue chain is Probable indole-3-acetic acid-amido synthetase GH3.7 (620 aa).

The protein belongs to the IAA-amido conjugating enzyme family. As to expression, ubiquitous.

May catalyze the synthesis of indole-3-acetic acid (IAA)-amino acid conjugates, providing a mechanism for the plant to cope with the presence of excess auxin. The polypeptide is Probable indole-3-acetic acid-amido synthetase GH3.7 (GH3.7) (Oryza sativa subsp. japonica (Rice)).